The sequence spans 477 residues: Proline--tRNA ligase (477 aa).

Belongs to the class-II aminoacyl-tRNA synthetase family. ProS type 3 subfamily. As to quaternary structure, homodimer.

The protein resides in the cytoplasm. The enzyme catalyses tRNA(Pro) + L-proline + ATP = L-prolyl-tRNA(Pro) + AMP + diphosphate. Functionally, catalyzes the attachment of proline to tRNA(Pro) in a two-step reaction: proline is first activated by ATP to form Pro-AMP and then transferred to the acceptor end of tRNA(Pro). This is Proline--tRNA ligase from Methanoculleus marisnigri (strain ATCC 35101 / DSM 1498 / JR1).